We begin with the raw amino-acid sequence, 392 residues long: MPIEEHIAREQERLRAKQRYRTLPETGARRGPYITVGGRELLNLSSNDYLGLGSEPKLLASWMAQVECGGADGRFAMTSSSSRLLTGNFPVGGELESAIAKAYGSEAALVFNSGYHANTGILPSLSTRHDLILSDRLNHASIIDGLRIAEAEYRRYRHADYDHLEELLASAAGKYRQVFIVTESVFSMDGDLADLRRLVDLKKRYGAMLIVDEAHGVGVYGQRGLGLCEALGVLENIDILIGTFGKALASTGAYAVMSGLFREYLVNTMRTLIFTTALPPMMLSWSLATFTRQLEMRREREHLLGLAARLRETLGDAGFETPGESHIVPVVLGEDRAAVAMAAALREAGYHALPVRPPTVPENSARLRLSLRADLAVEQIDALASTMQSLRS.

Position 21 (Arg-21) interacts with substrate. 114–115 (GY) is a pyridoxal 5'-phosphate binding site. His-139 contributes to the substrate binding site. Pyridoxal 5'-phosphate contacts are provided by residues Ser-187, 212-215 (DEAH), and 243-246 (TFGK). Lys-246 carries the N6-(pyridoxal phosphate)lysine modification. Thr-359 contacts substrate.

The protein belongs to the class-II pyridoxal-phosphate-dependent aminotransferase family. BioF subfamily. In terms of assembly, homodimer. Pyridoxal 5'-phosphate serves as cofactor.

The enzyme catalyses 6-carboxyhexanoyl-[ACP] + L-alanine + H(+) = (8S)-8-amino-7-oxononanoate + holo-[ACP] + CO2. It participates in cofactor biosynthesis; biotin biosynthesis. Its function is as follows. Catalyzes the decarboxylative condensation of pimeloyl-[acyl-carrier protein] and L-alanine to produce 8-amino-7-oxononanoate (AON), [acyl-carrier protein], and carbon dioxide. The sequence is that of 8-amino-7-oxononanoate synthase from Chlorobaculum parvum (strain DSM 263 / NCIMB 8327) (Chlorobium vibrioforme subsp. thiosulfatophilum).